A 298-amino-acid polypeptide reads, in one-letter code: MTKQTEYKRKPEWLKIKLNTNENYTGLKKMMRSKNLHTVCEEAKCPNIHECWAVRKTATFMILGAVCTRACRFCAVKTGLPTELDLQEPERVADSVVQMGLKHVVITAVARDDLKDGGAAVFAETVRAVRRENPFTSIEVLPSDMGGVEENLKMLMDAKPDILNHNIETVRRLSNRVRARAKYDRSLEFLRRAKEMQPDIPTKSSIMLGLGETREDLIEAMDDLRANNVDILTLGQYLQPSKKHLPVIKYYPPAEFAELKEIALSKGFSHCEAGPLVRSSYHADEQVRSAKEKTAEAK.

[4Fe-4S] cluster is bound by residues cysteine 40, cysteine 45, cysteine 51, cysteine 67, cysteine 71, cysteine 74, and serine 280. One can recognise a Radical SAM core domain in the interval 53–269 (AVRKTATFMI…KEIALSKGFS (217 aa)).

The protein belongs to the radical SAM superfamily. Lipoyl synthase family. It depends on [4Fe-4S] cluster as a cofactor.

Its subcellular location is the cytoplasm. The enzyme catalyses [[Fe-S] cluster scaffold protein carrying a second [4Fe-4S](2+) cluster] + N(6)-octanoyl-L-lysyl-[protein] + 2 oxidized [2Fe-2S]-[ferredoxin] + 2 S-adenosyl-L-methionine + 4 H(+) = [[Fe-S] cluster scaffold protein] + N(6)-[(R)-dihydrolipoyl]-L-lysyl-[protein] + 4 Fe(3+) + 2 hydrogen sulfide + 2 5'-deoxyadenosine + 2 L-methionine + 2 reduced [2Fe-2S]-[ferredoxin]. Its pathway is protein modification; protein lipoylation via endogenous pathway; protein N(6)-(lipoyl)lysine from octanoyl-[acyl-carrier-protein]. Functionally, catalyzes the radical-mediated insertion of two sulfur atoms into the C-6 and C-8 positions of the octanoyl moiety bound to the lipoyl domains of lipoate-dependent enzymes, thereby converting the octanoylated domains into lipoylated derivatives. The chain is Lipoyl synthase from Bacillus mycoides (strain KBAB4) (Bacillus weihenstephanensis).